A 150-amino-acid chain; its full sequence is uncharacterized protein (150 aa).

This is an uncharacterized protein from Rickettsia prowazekii (strain Madrid E).